Consider the following 119-residue polypeptide: uncharacterized protein (119 aa).

This is an uncharacterized protein from Escherichia coli (Bacteriophage T4).